A 781-amino-acid chain; its full sequence is Catenin beta-1 (781 aa).

A2 bears the N-acetylalanine mark. An interaction with VCL region spans residues 2–23; sequence ATQADLMELDMAMEPDRKAAVS. S23 bears the Phosphoserine; by GSK3-beta; alternate mark. An O-linked (GlcNAc) serine; alternate glycan is attached at S23. Position 29 is a phosphoserine; by GSK3-beta (S29). Phosphoserine; by GSK3-beta and HIPK2 occurs at positions 33 and 37. Residues 34–57 form a disordered region; sequence GIHSGATTTAPSLSGKGNPEEEDV. T41 bears the Phosphothreonine; by GSK3-beta mark. S45 carries the post-translational modification Phosphoserine. The residue at position 49 (K49) is an N6-acetyllysine. Position 64 is a phosphotyrosine; by PTK6 (Y64). Y142 carries the post-translational modification Phosphotyrosine; by FYN and PTK6. 12 ARM repeats span residues 151–191, 193–234, 235–276, 277–318, 319–360, 361–389, 400–441, 442–484, 489–530, 531–571, 594–636, and 637–666; these read RAIP…IMRS, QMVS…IFKS, GGIP…VRLA, GGLQ…ILAS, GGPQ…IVEA, GGMQALGPHLTDPSQRLVQNCLWTLRNLS, GLLG…VCQV, GGIE…AQNA, YGLP…LREQ, GAIP…EIVE, NTIP…AEGA, and TAPLTELLHSRNEGVATYAAAVLFRMSEDK. The tract at residues 156–178 is interaction with BCL9; that stretch reads LTKLLNDEDQVVVNKAAVMVHQL. S191 is subject to Phosphoserine. S246 carries the phosphoserine; by CDK5 modification. A phosphotyrosine mark is found at Y331 and Y333. Phosphoserine is present on S552. T556 is subject to Phosphothreonine. The residue at position 619 (C619) is an S-nitrosocysteine. At S675 the chain carries Phosphoserine. The tract at residues 720–781 is disordered; that stretch reads HSGGYGQDAL…NQLAWFDTDL (62 aa). The segment covering 734-745 has biased composition (basic and acidic residues); it reads MMEHEMGGHHPG. The segment at 772–781 is interaction with SCRIB; sequence NQLAWFDTDL.

It belongs to the beta-catenin family. In terms of assembly, two separate complex-associated pools are found in the cytoplasm. The majority is present as component of an E-cadherin/ catenin adhesion complex composed of at least E-cadherin/CDH1 and beta-catenin/CTNNB1, and possibly alpha-catenin/CTNNA1; the complex is located to adherens junctions. The stable association of CTNNA1 is controversial as CTNNA1 was shown not to bind to F-actin when assembled in the complex. Alternatively, the CTNNA1-containing complex may be linked to F-actin by other proteins such as LIMA1. Another cytoplasmic pool is part of a large complex containing AXIN1, AXIN2, APC, CSNK1A1 and GSK3B that promotes phosphorylation on N-terminal Ser and Thr residues and ubiquitination of CTNNB1. Interacts directly with AXIN1; the interaction is regulated by CK2 via BTRC and its subsequent degradation by the proteasome. Interacts directly with AXIN1; the interaction is regulated by CDK2 phosphorylation. Wnt-dependent activation of DVL antagonizes the action of GSK3B. When GSK3B activity is inhibited the complex dissociates, CTNNB1 is dephosphorylated and is no longer targeted for destruction. The stabilized protein translocates to the nucleus, where it binds TCF/LEF-1 family members, BCL9, BCL9L and possibly also RUVBL1 and CHD8. Binds CTNNBIP and EP300. CTNNB1 forms a ternary complex with LEF1 and EP300 that is disrupted by CTNNBIP1 binding. Interacts with TAX1BP3 (via the PDZ domain); this interaction inhibits the transcriptional activity of CTNNB1. Interacts with AJAP1, BAIAP1, CARM1, CTNNA3, CXADR and PCDH11Y. Binds NHERF1. Interacts with GLIS2. Interacts with XIRP1. Interacts with PTPRU (via the cytoplasmic juxtamembrane domain) and with SLC30A9. Interacts with EMD. Interacts with SCRIB. Interacts with TNIK and TCF7L2. Interacts with SESTD1 and TRPC4. Interacts directly with AXIN1; the interaction is regulated by CDK2 phosphorylation of AXIN1. Interacts with CAV1. Interacts with TRPV4. The TRPV4 and CTNNB1 complex can interact with CDH1. Interacts with VCL. Interacts with PTPRJ. Interacts with PKT7. Interacts with NANOS1. Interacts with CDK2, NDRG2, NEK2 and CDK5. Found in a complex composed of MACF1, APC, AXIN1, CTNNB1 and GSK3B. Interacts with PTK6. Interacts with SOX7; this interaction may lead to proteasomal degradation of active CTNNB1 and thus inhibition of Wnt/beta-catenin-stimulated transcription. Identified in a complex with HINT1 and MITF. Interacts with FHIT. The CTNNB1 and TCF4 complex interacts with PML. Interacts with FERMT2. Identified in a complex with TCF4 and FERMT2. Interacts with RAPGEF2. Interacts with FAT1 (via the cytoplasmic domain). Interacts with RORA. May interact with P-cadherin/CDH3. Interacts with RNF220. Interacts with CTNND2. Interacts (via the C-terminal region) with CBY1. The complex composed, at least, of APC, CTNNB1 and GSK3B interacts with JPT1; the interaction requires the inactive form of GSK3B (phosphorylated at 'Ser-9'). Interacts with DLG5. Interacts with FAM53B; promoting translocation to the nucleus. Interacts with TMEM170B. Interacts with AHI1. Interacts with GID8. Component of an cadherin:catenin adhesion complex composed of at least of CDH26, beta-catenin/CTNNB1, alpha-catenin/CTNNA1 and p120 catenin/CTNND1. Forms a complex comprising APPL1, RUVBL2, APPL2, HDAC1 and HDAC2. Interacts with IRF2BPL; mediates the ubiquitination and degradation of CTNNB1. Interacts with AMFR. Interacts with LMBR1L. Interacts with SOX30; prevents interaction of CTNNB1 with TCF7L2/TCF4 and leads to inhibition of Wnt signaling. Interacts with SOX9; inhibiting CTNNB1 activity by competing with the binding sites of TCF/LEF within CTNNB1, thereby inhibiting the Wnt signaling. Interacts with SPN/CD43 cytoplasmic tail. Interacts (when phosphorylated at Tyr-333) with isoform M2 of PKM (PKM2); promoting transcription activation. Interacts with PKP2 (via HEAD domain). Interacts with CDH1. Interacts (when unphosphorylated) with FLYWCH1, perhaps preventing interaction of CTNNB1 with TCF4, and thereby regulating transcription activation; phosphorylation of CTNNB1 may inhibit the interaction. Interacts (via the central armadillo domains) with probable transcriptional regulator ADNP (via N-terminal region); interaction is direct and stabilizes CTNNB1 by modulating its phosphorylation by glycogen synthase kinase-3 beta GSK3B. Interacts with NR5A2. Interacts with DSG2; the interaction promotes localization of CTNNB1 at cell junctions thus reducing its nuclear localization and subsequent transcription of CTNNB1/TCF-target genes. In terms of processing, phosphorylation by GSK3B requires prior phosphorylation of Ser-45 by another kinase. Phosphorylation proceeds then from Thr-41 to Ser-33. Phosphorylated by NEK2. EGF stimulates tyrosine phosphorylation. Phosphorylated on Ser-33 and Ser-37 by HIPK2. This phosphorylation triggers proteasomal degradation. Phosphorylation at Ser-552 by AMPK promotes stabilization of the protein, enhancing TCF/LEF-mediated transcription. Phosphorylation on Ser-191 and Ser-246 by CDK5. Phosphorylation by CDK2 regulates insulin internalization. Phosphorylation by PTK6 at Tyr-64, Tyr-142, Tyr-331 and/or Tyr-333 with the predominant site at Tyr-64 is not essential for inhibition of transcriptional activity. Phosphorylation by SRC at Tyr-333 promotes interaction with isoform M2 of PKM (PKM2); promoting transcription activation. Ubiquitinated by the SCF(BTRC) E3 ligase complex when phosphorylated by GSK3B, leading to its degradation. Ubiquitinated by a E3 ubiquitin ligase complex containing UBE2D1, SIAH1, CACYBP/SIP, SKP1, APC and TBL1X, leading to its subsequent proteasomal degradation. Ubiquitinated and degraded following interaction with SOX9. Ubiquitinated via 'Lys-11'- and 'Lys-29'-linked ubiquitin chains by UBR5, leading to its stabilization. Post-translationally, S-nitrosylation at Cys-619 within adherens junctions promotes VEGF-induced, NO-dependent endothelial cell permeability by disrupting interaction with E-cadherin, thus mediating disassembly adherens junctions. In terms of processing, O-glycosylation at Ser-23 decreases nuclear localization and transcriptional activity, and increases localization to the plasma membrane and interaction with E-cadherin CDH1. Deacetylated at Lys-49 by SIRT1. Expressed in the testis.

The protein resides in the cytoplasm. It localises to the nucleus. The protein localises to the cytoskeleton. Its subcellular location is the cell junction. It is found in the adherens junction. The protein resides in the cell membrane. It localises to the microtubule organizing center. The protein localises to the centrosome. Its subcellular location is the spindle pole. It is found in the synapse. The protein resides in the cilium basal body. Functionally, key downstream component of the canonical Wnt signaling pathway. In the absence of Wnt, forms a complex with AXIN1, AXIN2, APC, CSNK1A1 and GSK3B that promotes phosphorylation on N-terminal Ser and Thr residues and ubiquitination of CTNNB1 via BTRC and its subsequent degradation by the proteasome. In the presence of Wnt ligand, CTNNB1 is not ubiquitinated and accumulates in the nucleus, where it acts as a coactivator for transcription factors of the TCF/LEF family, leading to activate Wnt responsive genes. Also acts as a coactivator for other transcription factors, such as NR5A2. Promotes epithelial to mesenchymal transition/mesenchymal to epithelial transition (EMT/MET) via driving transcription of CTNNB1/TCF-target genes. Involved in the regulation of cell adhesion, as component of an E-cadherin:catenin adhesion complex. Acts as a negative regulator of centrosome cohesion. Involved in the CDK2/PTPN6/CTNNB1/CEACAM1 pathway of insulin internalization. Blocks anoikis of malignant kidney and intestinal epithelial cells and promotes their anchorage-independent growth by down-regulating DAPK2. Disrupts PML function and PML-NB formation by inhibiting RANBP2-mediated sumoylation of PML. Promotes neurogenesis by maintaining sympathetic neuroblasts within the cell cycle. Involved in chondrocyte differentiation via interaction with SOX9: SOX9-binding competes with the binding sites of TCF/LEF within CTNNB1, thereby inhibiting the Wnt signaling. Acts as a positive regulator of odontoblast differentiation during mesenchymal tooth germ formation, via promoting the transcription of differentiation factors such as LEF1, BMP2 and BMP4. Activity is repressed in a MSX1-mediated manner at the bell stage of mesenchymal tooth germ formation which prevents premature differentiation of odontoblasts. The chain is Catenin beta-1 from Rattus norvegicus (Rat).